Consider the following 331-residue polypeptide: NADH-quinone oxidoreductase subunit H (331 aa).

Helical transmembrane passes span 7 to 27, 81 to 101, 114 to 134, 154 to 174, 187 to 207, 238 to 258, 271 to 291, and 310 to 330; these read ALVT…AVVI, MIFT…FAIV, IGIL…LFAG, ISYE…VGSF, VWFI…GVAV, FFVG…TLFF, WLSF…FILI, and VCLP…LAAA.

It belongs to the complex I subunit 1 family. As to quaternary structure, NDH-1 is composed of 13 different subunits. Subunits NuoA, H, J, K, L, M, N constitute the membrane sector of the complex.

The protein localises to the cell inner membrane. It carries out the reaction a quinone + NADH + 5 H(+)(in) = a quinol + NAD(+) + 4 H(+)(out). Its function is as follows. NDH-1 shuttles electrons from NADH, via FMN and iron-sulfur (Fe-S) centers, to quinones in the respiratory chain. The immediate electron acceptor for the enzyme in this species is believed to be ubiquinone. Couples the redox reaction to proton translocation (for every two electrons transferred, four hydrogen ions are translocated across the cytoplasmic membrane), and thus conserves the redox energy in a proton gradient. This subunit may bind ubiquinone. The chain is NADH-quinone oxidoreductase subunit H from Pseudomonas aeruginosa (strain ATCC 15692 / DSM 22644 / CIP 104116 / JCM 14847 / LMG 12228 / 1C / PRS 101 / PAO1).